The primary structure comprises 646 residues: Beta-mannosyltransferase 6 (646 aa).

At M1–R25 the chain is on the cytoplasmic side. The helical transmembrane segment at L26–N46 threads the bilayer. The Extracellular segment spans residues N47–N646. 9 N-linked (GlcNAc...) asparagine glycosylation sites follow: N62, N81, N103, N117, N127, N132, N146, N334, and N393.

It belongs to the BMT family.

Its subcellular location is the membrane. Its function is as follows. Beta-mannosyltransferase involved in cell wall biosynthesis. Required for beta-1,2-mannose transfer on phospholipomannan. Required for pro-inflammatory response in macrophages through phospholipomannan-induced TNF-alpha production. In Candida albicans (strain SC5314 / ATCC MYA-2876) (Yeast), this protein is Beta-mannosyltransferase 6 (BMT6).